The sequence spans 380 residues: Guanine nucleotide-binding protein subunit beta (380 aa).

7 WD repeats span residues 64–94, 106–136, 155–186, 203–234, 247–277, 296–326, and 342–372; these read GHSG…IVWN, LHCP…SIFN, GHKG…VLWD, GHTA…RLWD, GHED…RLFD, NELP…YVWD, and SHDG…KIWA.

Belongs to the WD repeat G protein beta family. As to quaternary structure, g proteins are composed of 3 units, alpha, beta and gamma. In terms of tissue distribution, present in the root, leaf and tassel.

Functionally, guanine nucleotide-binding proteins (G proteins) are involved as a modulator or transducer in various transmembrane signaling systems. The beta and gamma chains are required for the GTPase activity, for replacement of GDP by GTP, and for G protein-effector interaction. The sequence is that of Guanine nucleotide-binding protein subunit beta (GB1) from Zea mays (Maize).